The primary structure comprises 173 residues: Ribulose bisphosphate carboxylase small subunit, chloroplastic 1 (173 aa).

The transit peptide at 1-52 (MMVSTAAVARVRPAQTNMVGAFNGCRSSVAFPATRKANNDLSTLPSSGGRVS) directs the protein to the chloroplast.

Belongs to the RuBisCO small chain family. As to quaternary structure, heterohexadecamer of 8 large and 8 small subunits.

The protein localises to the plastid. It is found in the chloroplast. RuBisCO catalyzes two reactions: the carboxylation of D-ribulose 1,5-bisphosphate, the primary event in carbon dioxide fixation, as well as the oxidative fragmentation of the pentose substrate. Both reactions occur simultaneously and in competition at the same active site. Although the small subunit is not catalytic it is essential for maximal activity. This is Ribulose bisphosphate carboxylase small subunit, chloroplastic 1 from Lemna gibba (Swollen duckweed).